The primary structure comprises 377 residues: Porphobilinogen deaminase (377 aa).

Cys269 bears the S-(dipyrrolylmethanemethyl)cysteine mark.

Belongs to the HMBS family. Monomer. Requires dipyrromethane as cofactor.

The enzyme catalyses 4 porphobilinogen + H2O = hydroxymethylbilane + 4 NH4(+). It functions in the pathway porphyrin-containing compound metabolism; protoporphyrin-IX biosynthesis; coproporphyrinogen-III from 5-aminolevulinate: step 2/4. Its function is as follows. Tetrapolymerization of the monopyrrole PBG into the hydroxymethylbilane pre-uroporphyrinogen in several discrete steps. This chain is Porphobilinogen deaminase, found in Micrococcus luteus (strain ATCC 4698 / DSM 20030 / JCM 1464 / CCM 169 / CCUG 5858 / IAM 1056 / NBRC 3333 / NCIMB 9278 / NCTC 2665 / VKM Ac-2230) (Micrococcus lysodeikticus).